The chain runs to 67 residues: Large ribosomal subunit protein uL29 (67 aa).

The protein belongs to the universal ribosomal protein uL29 family.

The polypeptide is Large ribosomal subunit protein uL29 (Wolbachia pipientis subsp. Culex pipiens (strain wPip)).